The sequence spans 333 residues: Adenosine deaminase (333 aa).

Zn(2+) is bound by residues H12 and H14. The substrate site is built by H14, D16, and G170. H197 is a Zn(2+) binding site. Residue E200 is the Proton donor of the active site. Residue D278 coordinates Zn(2+). D279 is a substrate binding site.

This sequence belongs to the metallo-dependent hydrolases superfamily. Adenosine and AMP deaminases family. Adenosine deaminase subfamily. Requires Zn(2+) as cofactor.

It catalyses the reaction adenosine + H2O + H(+) = inosine + NH4(+). It carries out the reaction 2'-deoxyadenosine + H2O + H(+) = 2'-deoxyinosine + NH4(+). Its function is as follows. Catalyzes the hydrolytic deamination of adenosine and 2-deoxyadenosine. In Salmonella dublin (strain CT_02021853), this protein is Adenosine deaminase.